The sequence spans 101 residues: Small ribosomal subunit protein uS14 (101 aa).

It belongs to the universal ribosomal protein uS14 family. Part of the 30S ribosomal subunit. Contacts proteins S3 and S10.

Binds 16S rRNA, required for the assembly of 30S particles and may also be responsible for determining the conformation of the 16S rRNA at the A site. The chain is Small ribosomal subunit protein uS14 from Aeromonas salmonicida (strain A449).